A 183-amino-acid polypeptide reads, in one-letter code: Tetrahydromethanopterin S-methyltransferase subunit A 2 (183 aa).

Over 1–101 (MFLMVEKKPV…TMKALHSNGV (101 aa)) the chain is Cytoplasmic. His-87 is a 5-hydroxybenzimidazolylcob(I)amide binding site. The helical transmembrane segment at 102-118 (DLETGRIIGATGAIPYI) threads the bilayer. Over 119–183 (ENMPEEAIER…IGKGDSEENT (65 aa)) the chain is Extracellular.

This sequence belongs to the MtrA family. The complex is composed of 8 subunits; MtrA, MtrB, MtrC, MtrD, MtrE, MtrF, MtrG and MtrH. 5-hydroxybenzimidazolylcob(I)amide serves as cofactor.

The protein localises to the cell membrane. It carries out the reaction 5-methyl-5,6,7,8-tetrahydromethanopterin + coenzyme M + 2 Na(+)(in) = 5,6,7,8-tetrahydromethanopterin + methyl-coenzyme M + 2 Na(+)(out). The protein operates within one-carbon metabolism; methanogenesis from CO(2); methyl-coenzyme M from 5,10-methylene-5,6,7,8-tetrahydromethanopterin: step 2/2. In terms of biological role, part of a complex that catalyzes the formation of methyl-coenzyme M and tetrahydromethanopterin from coenzyme M and methyl-tetrahydromethanopterin. This is an energy-conserving, sodium-ion translocating step. This chain is Tetrahydromethanopterin S-methyltransferase subunit A 2, found in Methanothermobacter thermautotrophicus (strain ATCC 29096 / DSM 1053 / JCM 10044 / NBRC 100330 / Delta H) (Methanobacterium thermoautotrophicum).